A 383-amino-acid chain; its full sequence is Chorismate synthase (383 aa).

Positions 39 and 45 each coordinate NADP(+). Residues 128 to 130 (RAS), G291, 306 to 310 (KPIAT), and R332 each bind FMN.

It belongs to the chorismate synthase family. Homotetramer. Requires FMNH2 as cofactor.

The catalysed reaction is 5-O-(1-carboxyvinyl)-3-phosphoshikimate = chorismate + phosphate. It functions in the pathway metabolic intermediate biosynthesis; chorismate biosynthesis; chorismate from D-erythrose 4-phosphate and phosphoenolpyruvate: step 7/7. In terms of biological role, catalyzes the anti-1,4-elimination of the C-3 phosphate and the C-6 proR hydrogen from 5-enolpyruvylshikimate-3-phosphate (EPSP) to yield chorismate, which is the branch point compound that serves as the starting substrate for the three terminal pathways of aromatic amino acid biosynthesis. This reaction introduces a second double bond into the aromatic ring system. This Thermus thermophilus (strain ATCC 27634 / DSM 579 / HB8) protein is Chorismate synthase.